Consider the following 936-residue polypeptide: Isoleucine--tRNA ligase (936 aa).

The short motif at 58–68 (PYANGRAHLGT) is the 'HIGH' region element. Glu561 serves as a coordination point for L-isoleucyl-5'-AMP. The 'KMSKS' region motif lies at 602–606 (KMSKS). An ATP-binding site is contributed by Lys605. Zn(2+) is bound by residues Cys899, Cys902, Cys919, and Cys922.

Belongs to the class-I aminoacyl-tRNA synthetase family. IleS type 1 subfamily. In terms of assembly, monomer. Zn(2+) is required as a cofactor.

The protein resides in the cytoplasm. It carries out the reaction tRNA(Ile) + L-isoleucine + ATP = L-isoleucyl-tRNA(Ile) + AMP + diphosphate. Functionally, catalyzes the attachment of isoleucine to tRNA(Ile). As IleRS can inadvertently accommodate and process structurally similar amino acids such as valine, to avoid such errors it has two additional distinct tRNA(Ile)-dependent editing activities. One activity is designated as 'pretransfer' editing and involves the hydrolysis of activated Val-AMP. The other activity is designated 'posttransfer' editing and involves deacylation of mischarged Val-tRNA(Ile). This is Isoleucine--tRNA ligase from Coxiella burnetii (strain CbuG_Q212) (Coxiella burnetii (strain Q212)).